A 441-amino-acid chain; its full sequence is Ribosomal protein uS12 methylthiotransferase RimO (441 aa).

The MTTase N-terminal domain occupies 7 to 117; it reads PKISFVSLGC…VLEAVHRASP (111 aa). Residues C16, C52, C81, C148, C152, and C155 each contribute to the [4Fe-4S] cluster site. Residues 134–371 enclose the Radical SAM core domain; it reads LTPRHYAYLK…MARQQKISAR (238 aa). One can recognise a TRAM domain in the interval 374-440; that stretch reads KRKVGTRQQI…EYDLHGTVAG (67 aa).

Belongs to the methylthiotransferase family. RimO subfamily. Requires [4Fe-4S] cluster as cofactor.

Its subcellular location is the cytoplasm. The catalysed reaction is L-aspartate(89)-[ribosomal protein uS12]-hydrogen + (sulfur carrier)-SH + AH2 + 2 S-adenosyl-L-methionine = 3-methylsulfanyl-L-aspartate(89)-[ribosomal protein uS12]-hydrogen + (sulfur carrier)-H + 5'-deoxyadenosine + L-methionine + A + S-adenosyl-L-homocysteine + 2 H(+). Functionally, catalyzes the methylthiolation of an aspartic acid residue of ribosomal protein uS12. The polypeptide is Ribosomal protein uS12 methylthiotransferase RimO (Bradyrhizobium sp. (strain BTAi1 / ATCC BAA-1182)).